The primary structure comprises 617 residues: Dihydroxy-acid dehydratase (617 aa).

Asp81 serves as a coordination point for Mg(2+). Cys122 lines the [2Fe-2S] cluster pocket. Asp123 and Lys124 together coordinate Mg(2+). Lys124 is subject to N6-carboxylysine. Residue Cys195 coordinates [2Fe-2S] cluster. Position 491 (Glu491) interacts with Mg(2+). The active-site Proton acceptor is Ser517.

This sequence belongs to the IlvD/Edd family. As to quaternary structure, homodimer. It depends on [2Fe-2S] cluster as a cofactor. The cofactor is Mg(2+).

The catalysed reaction is (2R)-2,3-dihydroxy-3-methylbutanoate = 3-methyl-2-oxobutanoate + H2O. It catalyses the reaction (2R,3R)-2,3-dihydroxy-3-methylpentanoate = (S)-3-methyl-2-oxopentanoate + H2O. It participates in amino-acid biosynthesis; L-isoleucine biosynthesis; L-isoleucine from 2-oxobutanoate: step 3/4. The protein operates within amino-acid biosynthesis; L-valine biosynthesis; L-valine from pyruvate: step 3/4. Its function is as follows. Functions in the biosynthesis of branched-chain amino acids. Catalyzes the dehydration of (2R,3R)-2,3-dihydroxy-3-methylpentanoate (2,3-dihydroxy-3-methylvalerate) into 2-oxo-3-methylpentanoate (2-oxo-3-methylvalerate) and of (2R)-2,3-dihydroxy-3-methylbutanoate (2,3-dihydroxyisovalerate) into 2-oxo-3-methylbutanoate (2-oxoisovalerate), the penultimate precursor to L-isoleucine and L-valine, respectively. The polypeptide is Dihydroxy-acid dehydratase (Rhodospirillum rubrum (strain ATCC 11170 / ATH 1.1.1 / DSM 467 / LMG 4362 / NCIMB 8255 / S1)).